Reading from the N-terminus, the 710-residue chain is Interferon-induced GTP-binding protein Mx2 (710 aa).

The segment at 1 to 87 (MSLSFRPLKY…RSKGPENNLY (87 aa)) is disordered. 2 stretches are compositionally biased toward polar residues: residues 39 to 50 (QTMSPPQWQVEE) and 58 to 79 (NNFS…QQRS). The 272-residue stretch at 112 to 383 (DLALPAIAVI…LIWHINKSLP (272 aa)) folds into the Dynamin-type G domain. Residues 122 to 129 (GDQSSGKS) form a G1 motif region. Residue 122–129 (GDQSSGKS) coordinates GTP. The G2 motif stretch occupies residues 147–149 (ITR). Residues 221 to 224 (DLPG) form a G3 motif region. Residues 221-225 (DLPGI) and 290-293 (TKPD) each bind GTP. The segment at 290–293 (TKPD) is G4 motif. Residues 322–325 (KCRG) are G5 motif. Residues 619–710 (IVEIGVHLNA…ALYEFPHFKG (92 aa)) enclose the GED domain.

It belongs to the TRAFAC class dynamin-like GTPase superfamily. Dynamin/Fzo/YdjA family.

The protein resides in the cytoplasm. It is found in the nucleus. Interferon-induced dynamin-like GTPase with antiviral activity against vesicular stomatitis virus (VSV). This Bubalus bubalis (Domestic water buffalo) protein is Interferon-induced GTP-binding protein Mx2 (MX2).